The primary structure comprises 84 residues: RNA-binding protein Hfq (84 aa).

In terms of domain architecture, Sm spans 11-71 (DTFLNFVRKN…ISTIMPGAPI (61 aa)).

Belongs to the Hfq family. As to quaternary structure, homohexamer.

Its function is as follows. RNA chaperone that binds small regulatory RNA (sRNAs) and mRNAs to facilitate mRNA translational regulation in response to envelope stress, environmental stress and changes in metabolite concentrations. Also binds with high specificity to tRNAs. This chain is RNA-binding protein Hfq, found in Beijerinckia indica subsp. indica (strain ATCC 9039 / DSM 1715 / NCIMB 8712).